Reading from the N-terminus, the 300-residue chain is tRNA pseudouridine synthase B (300 aa).

Asp38 (nucleophile) is an active-site residue.

Belongs to the pseudouridine synthase TruB family. Type 1 subfamily.

The catalysed reaction is uridine(55) in tRNA = pseudouridine(55) in tRNA. In terms of biological role, responsible for synthesis of pseudouridine from uracil-55 in the psi GC loop of transfer RNAs. In Anaplasma phagocytophilum (strain HZ), this protein is tRNA pseudouridine synthase B.